An 877-amino-acid chain; its full sequence is Phosphoenolpyruvate carboxylase (877 aa).

Active-site residues include His-137 and Lys-542.

The protein belongs to the PEPCase type 1 family. It depends on Mg(2+) as a cofactor.

It carries out the reaction oxaloacetate + phosphate = phosphoenolpyruvate + hydrogencarbonate. Its function is as follows. Forms oxaloacetate, a four-carbon dicarboxylic acid source for the tricarboxylic acid cycle. The chain is Phosphoenolpyruvate carboxylase from Tolumonas auensis (strain DSM 9187 / NBRC 110442 / TA 4).